The chain runs to 172 residues: Probable chorismate pyruvate-lyase (172 aa).

Met37, Arg79, Leu117, and Glu158 together coordinate substrate.

This sequence belongs to the UbiC family.

It localises to the cytoplasm. The enzyme catalyses chorismate = 4-hydroxybenzoate + pyruvate. Its pathway is cofactor biosynthesis; ubiquinone biosynthesis. In terms of biological role, removes the pyruvyl group from chorismate, with concomitant aromatization of the ring, to provide 4-hydroxybenzoate (4HB) for the ubiquinone pathway. The sequence is that of Probable chorismate pyruvate-lyase from Bartonella quintana (strain Toulouse) (Rochalimaea quintana).